Consider the following 327-residue polypeptide: Zinc transport protein ZntB (327 aa).

The Cytoplasmic segment spans residues 1-273 (MEAIKGSDVN…ARRTYTMSLM (273 aa)). Residues 274–294 (AMVFLPSTFLTGLFGVNLGGI) traverse the membrane as a helical segment. Over 295–300 (PGGGWR) the chain is Periplasmic. The chain crosses the membrane as a helical span at residues 301–321 (FGFSLFCILLVVLIGGVTLWL). At 322-327 (HRSKWL) the chain is on the cytoplasmic side.

This sequence belongs to the CorA metal ion transporter (MIT) (TC 1.A.35) family.

The protein localises to the cell inner membrane. The catalysed reaction is Zn(2+)(out) + H(+)(out) = Zn(2+)(in) + H(+)(in). Zinc transporter. Acts as a Zn(2+):proton symporter, which likely mediates zinc ion uptake. This Salmonella enteritidis PT4 (strain P125109) protein is Zinc transport protein ZntB.